Reading from the N-terminus, the 1249-residue chain is MGHSRRPAGGEKKSRFGRSKAAADVGDGRQAGGKPQVRKAVFESTKKKEIGVSDLTLLSKISNEAINDNLKLRFQHDEIYTYIGHVLVSVNPFRDLGIYTDSVLNSYRGKNRLEVPPHVFAVAESAYYNMKSYKDNQCVIISGESGAGKTEAAKRIMQYIASVSGGSDSSIQQTKDMVLATNPLLESFGNAKTLRNNNSSRFGKYLELEFNAQGEPVGANITNYLLEKSRVVGQITNERNFHIFYQFAKGAPQKYRDSFGVQQPQSYLYTSRSKCFDVPGVDDVAEFQDTLNAMSVIGMSEAEQDNVFRMLAAILWMGNIQFAEDDSGNAAITDQSVVDFVAYLLEVDAGQVNQALTIRMMETSRGGRRGSVYEVPLNTTQALAVRDALAKAIYFNLFDWIVGRVNQSLTAKGAVANSIGILDIYGFEIFEKNSFEQLCINYVNEKLQQIFIQLTLKAEQDEYEREQITWTPIKYFDNKVVCSLIEDKRPPGVFAALNDACATAHADSGAADNTFVGRLNFLGQNPNFENRQGQFIIKHYAGDVSYAVQGMTDKNKDQLLKDLLNLVQSSSNHFVHTLFPEQVNQDDKRRPPTASDKIKASANDLVATLMKAQPSYIRTIKPNDNKAPKEFNESNVLHQIKYLGLQENVRIRRAGFAYRQTFDKFVERFYLLSPKTSYAGDYTWTGDVETGARQILKDTRIPAEEYQMGITKVFIKTPETLFALEAMRDRYWHNMAIRIQRAWRNYLRYRTECAIRIQRFWRRMNGGLELLKLRDQGHTILGGRKERRRMSILGSRRFLGDYVGISNKGGPGEMIRSGAAISTSDDVLFSCRGEVLVSKFGRSSKPSPRIFVLTNRHVYIVSQNFVNNQLVISSERTIPIGAIKTVSASSYRDDWFSLVVGGQEPDPLCNCVFKTEFFTHLHNALRGQLNLKIGPEIEYNKKPGKLATVKVVKDGSQVDSYKSGTIHTGPGEPPNSVSKPTPRGKQVAARPVTKGKLLRPGGPGGGPSKLASRPVPERRPIPQPTPQTAAAQPTPASRPVPQPVAAVAASHSRTSSTASARAPPPPPPAPPAAAGPKKAKALYDFSSDNNGMLSISAGQIVEIVSKEGNGWWLCMNLETSAQGWTPEAYLEEQVAPTPKPAPPPPPPVAPRASPAPVNGSAAVAAAKAKAAPPPPAKRPNMAGRKTAPAPPPAPRDSAVSMNSQGDSSGASGRGTPSSVSNASLAGGLAEALRARQSAMQGKQDDDDDW.

The disordered stretch occupies residues 1–40 (MGHSRRPAGGEKKSRFGRSKAAADVGDGRQAGGKPQVRKA). A Myosin motor domain is found at 50 to 729 (IGVSDLTLLS…TLFALEAMRD (680 aa)). 143–150 (GESGAGKT) is a binding site for ATP. Ser-371 is modified (phosphoserine). The actin-binding stretch occupies residues 418–500 (SIGILDIYGF…PGVFAALNDA (83 aa)). IQ domains follow at residues 733–753 (HNMA…RTEC) and 754–779 (AIRI…QGHT). The 193-residue stretch at 787–979 (RRRMSILGSR…PGEPPNSVSK (193 aa)) folds into the TH1 domain. 2 disordered regions span residues 959–1081 (DSYK…KAKA) and 1127–1249 (EAYL…DDDW). 2 stretches are compositionally biased toward low complexity: residues 1026 to 1035 (PQTAAAQPTP) and 1043 to 1061 (PVAA…ASAR). Positions 1062–1073 (APPPPPPAPPAA) are enriched in pro residues. The 62-residue stretch at 1074-1135 (AGPKKAKALY…PEAYLEEQVA (62 aa)) folds into the SH3 domain. Residues 1137–1149 (TPKPAPPPPPPVA) are compositionally biased toward pro residues. The segment covering 1150–1170 (PRASPAPVNGSAAVAAAKAKA) has biased composition (low complexity). Polar residues predominate over residues 1199 to 1221 (VSMNSQGDSSGASGRGTPSSVSN). The span at 1222–1235 (ASLAGGLAEALRAR) shows a compositional bias: low complexity.

This sequence belongs to the TRAFAC class myosin-kinesin ATPase superfamily. Myosin family. Interacts (via IQ domains) with camA. In terms of processing, phosphorylation of the TEDS site (Ser-371) is required for the polarization of the actin cytoskeleton. Phosphorylation probably activates the myosin-I ATPase activity.

Its subcellular location is the cytoplasm. It is found in the cytoskeleton. It localises to the actin patch. Its function is as follows. Type-I myosin implicated in the organization of the actin cytoskeleton. Required for proper actin cytoskeleton polarization. At the cell cortex, assembles in patch-like structures together with proteins from the actin-polymerizing machinery and promotes actin assembly. Functions as actin nucleation-promoting factor (NPF) for the Arp2/3 complex. Plays an important role in polarized growth, spore germination, hyphal morphogenesis, and septal wall formation. This is Myosin-1 (myoA) from Emericella nidulans (strain FGSC A4 / ATCC 38163 / CBS 112.46 / NRRL 194 / M139) (Aspergillus nidulans).